The chain runs to 79 residues: Cell division protein ZapB (79 aa).

Residues 6-78 (FEKLEVKVQQ…LRALLGKMEE (73 aa)) are a coiled coil.

Belongs to the ZapB family. In terms of assembly, homodimer. The ends of the coiled-coil dimer bind to each other, forming polymers. Interacts with FtsZ.

Its subcellular location is the cytoplasm. Its function is as follows. Non-essential, abundant cell division factor that is required for proper Z-ring formation. It is recruited early to the divisome by direct interaction with FtsZ, stimulating Z-ring assembly and thereby promoting cell division earlier in the cell cycle. Its recruitment to the Z-ring requires functional FtsA or ZipA. The polypeptide is Cell division protein ZapB (Yersinia pseudotuberculosis serotype O:1b (strain IP 31758)).